The primary structure comprises 207 residues: N-(5'-phosphoribosyl)anthranilate isomerase (207 aa).

This sequence belongs to the TrpF family.

The enzyme catalyses N-(5-phospho-beta-D-ribosyl)anthranilate = 1-(2-carboxyphenylamino)-1-deoxy-D-ribulose 5-phosphate. It participates in amino-acid biosynthesis; L-tryptophan biosynthesis; L-tryptophan from chorismate: step 3/5. This is N-(5'-phosphoribosyl)anthranilate isomerase from Halorhodospira halophila (strain DSM 244 / SL1) (Ectothiorhodospira halophila (strain DSM 244 / SL1)).